The primary structure comprises 130 residues: Small ribosomal subunit protein uS11c (130 aa).

The protein belongs to the universal ribosomal protein uS11 family. As to quaternary structure, part of the 30S ribosomal subunit.

It localises to the plastid. The protein resides in the chloroplast. This chain is Small ribosomal subunit protein uS11c, found in Chlorella vulgaris (Green alga).